Reading from the N-terminus, the 485-residue chain is Membrane-bound lytic murein transglycosylase F (485 aa).

The N-terminal stretch at 1-29 (MFAHTALRQRCAKWLLATGLFLLLGACVE) is a signal peptide. A non-LT domain region spans residues 30 to 267 (KPSTLERVKE…RLKDRYYGHV (238 aa)). Positions 268–485 (DVLGYVGAYT…DKPADKSSPM (218 aa)) are LT domain. E314 is a catalytic residue. The tract at residues 465-485 (EGNLHVPGVNKDKPADKSSPM) is disordered. Positions 474–485 (NKDKPADKSSPM) are enriched in basic and acidic residues.

This sequence in the N-terminal section; belongs to the bacterial solute-binding protein 3 family. In the C-terminal section; belongs to the transglycosylase Slt family.

The protein resides in the cell outer membrane. It catalyses the reaction Exolytic cleavage of the (1-&gt;4)-beta-glycosidic linkage between N-acetylmuramic acid (MurNAc) and N-acetylglucosamine (GlcNAc) residues in peptidoglycan, from either the reducing or the non-reducing ends of the peptidoglycan chains, with concomitant formation of a 1,6-anhydrobond in the MurNAc residue.. Functionally, murein-degrading enzyme that degrades murein glycan strands and insoluble, high-molecular weight murein sacculi, with the concomitant formation of a 1,6-anhydromuramoyl product. Lytic transglycosylases (LTs) play an integral role in the metabolism of the peptidoglycan (PG) sacculus. Their lytic action creates space within the PG sacculus to allow for its expansion as well as for the insertion of various structures such as secretion systems and flagella. This is Membrane-bound lytic murein transglycosylase F from Pseudomonas putida (strain ATCC 700007 / DSM 6899 / JCM 31910 / BCRC 17059 / LMG 24140 / F1).